A 242-amino-acid chain; its full sequence is NAD(P)H-quinone oxidoreductase subunit K (242 aa).

[4Fe-4S] cluster-binding residues include cysteine 60, cysteine 61, cysteine 125, and cysteine 156.

This sequence belongs to the complex I 20 kDa subunit family. NDH-1 can be composed of about 15 different subunits; different subcomplexes with different compositions have been identified which probably have different functions. [4Fe-4S] cluster is required as a cofactor.

The protein resides in the cellular thylakoid membrane. It catalyses the reaction a plastoquinone + NADH + (n+1) H(+)(in) = a plastoquinol + NAD(+) + n H(+)(out). The catalysed reaction is a plastoquinone + NADPH + (n+1) H(+)(in) = a plastoquinol + NADP(+) + n H(+)(out). NDH-1 shuttles electrons from an unknown electron donor, via FMN and iron-sulfur (Fe-S) centers, to quinones in the respiratory and/or the photosynthetic chain. The immediate electron acceptor for the enzyme in this species is believed to be plastoquinone. Couples the redox reaction to proton translocation, and thus conserves the redox energy in a proton gradient. Cyanobacterial NDH-1 also plays a role in inorganic carbon-concentration. The sequence is that of NAD(P)H-quinone oxidoreductase subunit K from Prochlorococcus marinus (strain SARG / CCMP1375 / SS120).